The chain runs to 68 residues: Large ribosomal subunit protein uL29 (68 aa).

The protein belongs to the universal ribosomal protein uL29 family.

The polypeptide is Large ribosomal subunit protein uL29 (Methanobrevibacter smithii (strain ATCC 35061 / DSM 861 / OCM 144 / PS)).